Here is a 532-residue protein sequence, read N- to C-terminus: 2,3-bisphosphoglycerate-independent phosphoglycerate mutase (532 aa).

Mn(2+) is bound by residues Asp-15 and Ser-65. Ser-65 acts as the Phosphoserine intermediate in catalysis. Substrate contacts are provided by residues His-126, 156 to 157 (RD), Arg-188, Arg-194, 258 to 261 (RPDR), and Lys-331. Residues Asp-398, His-402, Asp-439, His-440, and His-457 each contribute to the Mn(2+) site.

It belongs to the BPG-independent phosphoglycerate mutase family. In terms of assembly, monomer. It depends on Mn(2+) as a cofactor.

The catalysed reaction is (2R)-2-phosphoglycerate = (2R)-3-phosphoglycerate. Its pathway is carbohydrate degradation; glycolysis; pyruvate from D-glyceraldehyde 3-phosphate: step 3/5. In terms of biological role, catalyzes the interconversion of 2-phosphoglycerate and 3-phosphoglycerate. The chain is 2,3-bisphosphoglycerate-independent phosphoglycerate mutase from Microcystis aeruginosa (strain NIES-843 / IAM M-2473).